The primary structure comprises 103 residues: Large ribosomal subunit protein uL24 (103 aa).

The protein belongs to the universal ribosomal protein uL24 family. As to quaternary structure, part of the 50S ribosomal subunit.

In terms of biological role, one of two assembly initiator proteins, it binds directly to the 5'-end of the 23S rRNA, where it nucleates assembly of the 50S subunit. One of the proteins that surrounds the polypeptide exit tunnel on the outside of the subunit. The chain is Large ribosomal subunit protein uL24 from Actinobacillus pleuropneumoniae serotype 3 (strain JL03).